The primary structure comprises 590 residues: Histone-binding protein N1/N2 (590 aa).

The interval Met1 to Ile30 is disordered. One copy of the TPR 1 repeat lies at Ala36–Gln69. The disordered stretch occupies residues Ala102–Gly328. Over residues Met106–Pro120 the composition is skewed to acidic residues. Basic and acidic residues-rich tracts occupy residues Leu128 to Glu250 and Ala262 to Glu275. Positions Glu293–Val327 are enriched in acidic residues. TPR repeat units lie at residues Ala357–His390 and Ala399–Arg432. The interval Gly492–Ala590 is disordered. A compositionally biased stretch (polar residues) spans Gly496–Ser525. The short motif at Val531 to Thr537 is the Nuclear localization signal element. A compositionally biased stretch (basic and acidic residues) spans Lys536–Gln553.

The protein belongs to the NASP family.

The protein localises to the nucleus. This protein is involved in nucleosome assembly. It is bound to H3 and H4 in the absence of DNA, but released from H3 and H4 in the presence of DNA. This is Histone-binding protein N1/N2 from Xenopus laevis (African clawed frog).